A 405-amino-acid polypeptide reads, in one-letter code: Probable dual-specificity RNA methyltransferase RlmN (405 aa).

Residues 1–15 (MSSTGSSVSTSGLVL) are compositionally biased toward low complexity. Residues 1 to 34 (MSSTGSSVSTSGLVLPSTPLAEPGKEVPLVVNTP) are disordered. Glu130 acts as the Proton acceptor in catalysis. The 245-residue stretch at 142–386 (SAARATLCLS…VTVRDTRGSE (245 aa)) folds into the Radical SAM core domain. A disulfide bond links Cys149 and Cys391. Residues Cys156, Cys160, and Cys163 each contribute to the [4Fe-4S] cluster site. Residues 211–212 (GE), Ser245, 268–270 (SLH), and Asn348 each bind S-adenosyl-L-methionine. Cys391 serves as the catalytic S-methylcysteine intermediate.

This sequence belongs to the radical SAM superfamily. RlmN family. Requires [4Fe-4S] cluster as cofactor.

Its subcellular location is the cytoplasm. The enzyme catalyses adenosine(2503) in 23S rRNA + 2 reduced [2Fe-2S]-[ferredoxin] + 2 S-adenosyl-L-methionine = 2-methyladenosine(2503) in 23S rRNA + 5'-deoxyadenosine + L-methionine + 2 oxidized [2Fe-2S]-[ferredoxin] + S-adenosyl-L-homocysteine. It catalyses the reaction adenosine(37) in tRNA + 2 reduced [2Fe-2S]-[ferredoxin] + 2 S-adenosyl-L-methionine = 2-methyladenosine(37) in tRNA + 5'-deoxyadenosine + L-methionine + 2 oxidized [2Fe-2S]-[ferredoxin] + S-adenosyl-L-homocysteine. Specifically methylates position 2 of adenine 2503 in 23S rRNA and position 2 of adenine 37 in tRNAs. This Cutibacterium acnes (strain DSM 16379 / KPA171202) (Propionibacterium acnes) protein is Probable dual-specificity RNA methyltransferase RlmN.